A 246-amino-acid chain; its full sequence is U11/U12 small nuclear ribonucleoprotein 35 kDa protein (246 aa).

One can recognise an RRM domain in the interval 51-129 (LTLFVARLNL…HEIFVDYELE (79 aa)). Lysine 172 participates in a covalent cross-link: Glycyl lysine isopeptide (Lys-Gly) (interchain with G-Cter in SUMO2). The interval 187–217 (SRSRERHWDSRTRDRDHDRGREKRWQEREPT) is disordered. A compositionally biased stretch (basic and acidic residues) spans 192 to 217 (RHWDSRTRDRDHDRGREKRWQEREPT).

As to quaternary structure, component of the U11/U12 snRNPs that are part of the U12-type spliceosome. Expressed in heart, liver, skeletal muscle and pancreas.

The protein resides in the nucleus. The protein is U11/U12 small nuclear ribonucleoprotein 35 kDa protein (SNRNP35) of Homo sapiens (Human).